Consider the following 234-residue polypeptide: 5'-methylthioadenosine/S-adenosylhomocysteine nucleosidase (234 aa).

Glutamate 12 serves as the catalytic Proton acceptor. Residues glycine 78, isoleucine 152, and 173 to 174 each bind substrate; that span reads ME. The active-site Proton donor is the aspartate 197.

This sequence belongs to the PNP/UDP phosphorylase family. MtnN subfamily.

The enzyme catalyses S-adenosyl-L-homocysteine + H2O = S-(5-deoxy-D-ribos-5-yl)-L-homocysteine + adenine. It catalyses the reaction S-methyl-5'-thioadenosine + H2O = 5-(methylsulfanyl)-D-ribose + adenine. It carries out the reaction 5'-deoxyadenosine + H2O = 5-deoxy-D-ribose + adenine. The protein operates within amino-acid biosynthesis; L-methionine biosynthesis via salvage pathway; S-methyl-5-thio-alpha-D-ribose 1-phosphate from S-methyl-5'-thioadenosine (hydrolase route): step 1/2. Its function is as follows. Catalyzes the irreversible cleavage of the glycosidic bond in both 5'-methylthioadenosine (MTA) and S-adenosylhomocysteine (SAH/AdoHcy) to adenine and the corresponding thioribose, 5'-methylthioribose and S-ribosylhomocysteine, respectively. Also cleaves 5'-deoxyadenosine, a toxic by-product of radical S-adenosylmethionine (SAM) enzymes, into 5-deoxyribose and adenine. The sequence is that of 5'-methylthioadenosine/S-adenosylhomocysteine nucleosidase from Desulfotalea psychrophila (strain LSv54 / DSM 12343).